A 331-amino-acid polypeptide reads, in one-letter code: Ferredoxin--NADP reductase (331 aa).

FAD is bound by residues glutamate 34, glutamine 42, tyrosine 47, valine 87, phenylalanine 120, aspartate 285, and threonine 325.

This sequence belongs to the ferredoxin--NADP reductase type 2 family. Homodimer. FAD serves as cofactor.

It carries out the reaction 2 reduced [2Fe-2S]-[ferredoxin] + NADP(+) + H(+) = 2 oxidized [2Fe-2S]-[ferredoxin] + NADPH. In Levilactobacillus brevis (strain ATCC 367 / BCRC 12310 / CIP 105137 / JCM 1170 / LMG 11437 / NCIMB 947 / NCTC 947) (Lactobacillus brevis), this protein is Ferredoxin--NADP reductase.